The following is a 91-amino-acid chain: Defensin-like protein 220 (91 aa).

A signal peptide spans 1–19; sequence MKTIFFFITFIVLVSSCTS. 3 cysteine pairs are disulfide-bonded: Cys-61–Cys-78, Cys-64–Cys-83, and Cys-68–Cys-85.

Belongs to the DEFL family.

It is found in the secreted. This is Defensin-like protein 220 from Arabidopsis thaliana (Mouse-ear cress).